Reading from the N-terminus, the 298-residue chain is NFU1 iron-sulfur cluster scaffold homolog, mitochondrial (298 aa).

A nifU region spans residues 190-258 (IKELLDTRIR…IPEVESVEQV (69 aa)). Residues Cys227 and Cys230 each coordinate [4Fe-4S] cluster. Polar residues predominate over residues 279 to 288 (QKESVNQPNA). The tract at residues 279 to 298 (QKESVNQPNAPVNIGGGTPN) is disordered.

This sequence belongs to the NifU family.

It localises to the mitochondrion. Molecular scaffold for [Fe-S] cluster assembly of mitochondrial iron-sulfur proteins. The sequence is that of NFU1 iron-sulfur cluster scaffold homolog, mitochondrial from Drosophila virilis (Fruit fly).